Consider the following 227-residue polypeptide: Cytidylate kinase (227 aa).

Residue 12–20 (GPSGAGKGT) participates in ATP binding.

Belongs to the cytidylate kinase family. Type 1 subfamily.

The protein resides in the cytoplasm. It catalyses the reaction CMP + ATP = CDP + ADP. The enzyme catalyses dCMP + ATP = dCDP + ADP. The polypeptide is Cytidylate kinase (Enterobacter sp. (strain 638)).